Reading from the N-terminus, the 193-residue chain is Imidazoleglycerol-phosphate dehydratase (193 aa).

It belongs to the imidazoleglycerol-phosphate dehydratase family.

It is found in the cytoplasm. The enzyme catalyses D-erythro-1-(imidazol-4-yl)glycerol 3-phosphate = 3-(imidazol-4-yl)-2-oxopropyl phosphate + H2O. It participates in amino-acid biosynthesis; L-histidine biosynthesis; L-histidine from 5-phospho-alpha-D-ribose 1-diphosphate: step 6/9. The protein is Imidazoleglycerol-phosphate dehydratase (hisB) of Saccharolobus solfataricus (strain ATCC 35092 / DSM 1617 / JCM 11322 / P2) (Sulfolobus solfataricus).